The sequence spans 130 residues: Small ribosomal subunit protein uS11 (130 aa).

Belongs to the universal ribosomal protein uS11 family. In terms of assembly, part of the 30S ribosomal subunit. Interacts with proteins S7 and S18. Binds to IF-3.

In terms of biological role, located on the platform of the 30S subunit, it bridges several disparate RNA helices of the 16S rRNA. Forms part of the Shine-Dalgarno cleft in the 70S ribosome. This is Small ribosomal subunit protein uS11 from Thermosynechococcus vestitus (strain NIES-2133 / IAM M-273 / BP-1).